We begin with the raw amino-acid sequence, 223 residues long: Deoxyribose-phosphate aldolase (223 aa).

The active-site Proton donor/acceptor is D89. K152 (schiff-base intermediate with acetaldehyde) is an active-site residue. Catalysis depends on K181, which acts as the Proton donor/acceptor.

It belongs to the DeoC/FbaB aldolase family. DeoC type 1 subfamily.

It is found in the cytoplasm. The catalysed reaction is 2-deoxy-D-ribose 5-phosphate = D-glyceraldehyde 3-phosphate + acetaldehyde. It participates in carbohydrate degradation; 2-deoxy-D-ribose 1-phosphate degradation; D-glyceraldehyde 3-phosphate and acetaldehyde from 2-deoxy-alpha-D-ribose 1-phosphate: step 2/2. In terms of biological role, catalyzes a reversible aldol reaction between acetaldehyde and D-glyceraldehyde 3-phosphate to generate 2-deoxy-D-ribose 5-phosphate. The sequence is that of Deoxyribose-phosphate aldolase from Bacillus cereus (strain G9842).